Reading from the N-terminus, the 436-residue chain is Drebrin-like protein (436 aa).

In terms of domain architecture, ADF-H spans 2–133; it reads AVNLSRNGPA…EPECIMEKVA (132 aa). Threonine 26 is modified (phosphothreonine). Serine 160 carries the post-translational modification Phosphoserine. N6-acetyllysine is present on lysine 176. Residues 179–233 are a coiled coil; the sequence is FWAKAEKEEENRRLEEKRRAEEERQRLEEERRERELQEAARREQRYQEQHRSAGA. Basic and acidic residues-rich tracts occupy residues 185–229 and 264–275; these read KEEE…EQHR and HPREIFKQKERA. Residues 185–341 form a disordered region; the sequence is KEEENRRLEE…AQTEEEPTYE (157 aa). The segment covering 276-286 has biased composition (polar residues); that stretch reads MSTTSVTSSQP. Phosphoserine occurs at positions 277, 280, 283, and 291. Polar residues predominate over residues 294–303; that stretch reads LQKQLTQPET. Position 296 is an N6-acetyllysine (lysine 296). Threonine 299 is modified (phosphothreonine). Phosphotyrosine is present on residues tyrosine 340 and tyrosine 350. The SH3 domain occupies 377–436; the sequence is GQGLCARALYDYQAADDTEISFDPENLITGIEVIDEGWWRGYGPDGHFGMFPANYVELIE.

The protein belongs to the ABP1 family. As to quaternary structure, interacts with SHANK3, SYN1 and PRAM1. Interacts with SHANK2. Interacts with FGD1, DNM1 and MAP4K1. Interacts with ANKRD54. Interacts with COBL. Interacts with WASL and WIPF1. In terms of tissue distribution, detected in hippocampus neurons and in the Purkinje cell layer in cerebellum (at protein level). Predominantly expressed in brain, thymus and spleen. Also found in testis, heart and lung. Little or no expression detected in ovary or muscle.

It is found in the cytoplasm. The protein resides in the cytoskeleton. Its subcellular location is the cell projection. It localises to the lamellipodium. The protein localises to the ruffle. It is found in the cell cortex. The protein resides in the cytosol. Its subcellular location is the synapse. It localises to the perikaryon. The protein localises to the neuron projection. It is found in the cell membrane. The protein resides in the cytoplasmic vesicle. Its subcellular location is the clathrin-coated vesicle membrane. It localises to the golgi apparatus membrane. The protein localises to the podosome. It is found in the early endosome. The protein resides in the dendrite. Its subcellular location is the postsynaptic density. Functionally, adapter protein that binds F-actin and DNM1, and thereby plays a role in receptor-mediated endocytosis. Plays a role in the reorganization of the actin cytoskeleton, formation of cell projections, such as neurites, in neuron morphogenesis and synapse formation via its interaction with WASL and COBL. Does not bind G-actin and promote actin polymerization by itself. Required for the formation of organized podosome rosettes. May act as a common effector of antigen receptor-signaling pathways in leukocytes. Acts as a key component of the immunological synapse that regulates T-cell activation by bridging TCRs and the actin cytoskeleton to gene activation and endocytic processes. This chain is Drebrin-like protein, found in Mus musculus (Mouse).